Here is a 562-residue protein sequence, read N- to C-terminus: ATP synthase subunit beta, mitochondrial (562 aa).

Low complexity-rich tracts occupy residues 1–13 and 20–40; these read MASR…LLRS and SKSP…SSKS. 2 disordered regions span residues 1 to 43 and 58 to 83; these read MASR…SRAS and SAAA…KITD. The N-terminal 55 residues, 1 to 55, are a transit peptide targeting the mitochondrion; it reads MASRRLLSSLLRSSSRRSVSKSPISNINPKLSSSSPSSKSRASPYGYLLTRAAEY. 237 to 244 lines the ATP pocket; sequence GGAGVGKT.

It belongs to the ATPase alpha/beta chains family. In terms of assembly, F-type ATPases have 2 components, CF(1) - the catalytic core - and CF(0) - the membrane proton channel. CF(1) has five subunits: alpha(3), beta(3), gamma(1), delta(1), epsilon(1). CF(0) has three main subunits: a, b and c.

It is found in the mitochondrion. Its subcellular location is the mitochondrion inner membrane. It catalyses the reaction ATP + H2O + 4 H(+)(in) = ADP + phosphate + 5 H(+)(out). Functionally, mitochondrial membrane ATP synthase (F(1)F(0) ATP synthase or Complex V) produces ATP from ADP in the presence of a proton gradient across the membrane which is generated by electron transport complexes of the respiratory chain. F-type ATPases consist of two structural domains, F(1) - containing the extramembraneous catalytic core, and F(0) - containing the membrane proton channel, linked together by a central stalk and a peripheral stalk. During catalysis, ATP synthesis in the catalytic domain of F(1) is coupled via a rotary mechanism of the central stalk subunits to proton translocation. Subunits alpha and beta form the catalytic core in F(1). Rotation of the central stalk against the surrounding alpha(3)beta(3) subunits leads to hydrolysis of ATP in three separate catalytic sites on the beta subunits. This is ATP synthase subunit beta, mitochondrial (ATPB) from Hevea brasiliensis (Para rubber tree).